The sequence spans 455 residues: Golgi pH regulator (455 aa).

A run of 2 helical transmembrane segments spans residues alanine 5–phenylalanine 25 and valine 46–leucine 66. N-linked (GlcNAc...) asparagine glycosylation is present at asparagine 67. 3 consecutive transmembrane segments (helical) span residues leucine 79–valine 99, leucine 111–phenylalanine 131, and valine 150–proline 170. An N-linked (GlcNAc...) asparagine glycan is attached at asparagine 180. The next 4 membrane-spanning stretches (helical) occupy residues glycine 290–phenylalanine 310, isoleucine 343–leucine 363, valine 378–isoleucine 398, and tryptophan 425–histidine 445.

It belongs to the Golgi pH regulator (TC 1.A.38) family. As to quaternary structure, homotrimer.

Its subcellular location is the golgi apparatus membrane. The catalysed reaction is iodide(out) = iodide(in). It carries out the reaction chloride(in) = chloride(out). The enzyme catalyses bromide(in) = bromide(out). It catalyses the reaction fluoride(in) = fluoride(out). Its function is as follows. Voltage-gated channel that enables the transfer of anions such as iodide, chloride, bromide and fluoride which may function in counter-ion conductance and participates in Golgi acidification. This chain is Golgi pH regulator (gpr89-b), found in Xenopus laevis (African clawed frog).